The chain runs to 66 residues: Beta-mammal toxin Css2 (66 aa).

In terms of domain architecture, LCN-type CS-alpha/beta spans 1-66; that stretch reads KEGYLVSKST…VWPLPNKTCN (66 aa). Disulfide bonds link C12–C65, C16–C41, C25–C46, and C29–C48. The residue at position 66 (N66) is an Asparagine amide.

It belongs to the long (4 C-C) scorpion toxin superfamily. Sodium channel inhibitor family. Beta subfamily. Post-translationally, C-terminal amidation increases its affinity for sodium channels. Expressed by the venom gland.

It is found in the secreted. In terms of biological role, beta toxin that binds site-4 of sodium channels (Nav) and reduces peak current (observed on Nav1.6/SCN8A (IC(50)=307 nM)), shifts the voltage of activation toward more negative potentials (observed on Nav1.6, Nav1.1 (weak), Nav1.2 (weak), and Nav1.7 (weak)), and induces resurgent currents at negative voltages following brief and strong depolarizations (observed on Nav1.6, Nav1.1 (weak), and Nav1.7 (weak)). A reduction of peak current of Nav1.5/SCN7A has been observed in another study (IC(50)=35-40 nM). This toxin is only active on mammals. It has been shown to bind phospholipids. This chain is Beta-mammal toxin Css2, found in Centruroides suffusus (Durango bark scorpion).